The chain runs to 549 residues: DDB1- and CUL4-associated factor 11 (549 aa).

Residues 1–24 (MGSRNSSSAGSGSLEPSEGLSRRG) are compositionally biased toward low complexity. The segment at 1 to 40 (MGSRNSSSAGSGSLEPSEGLSRRGTGLRRSEEEEEEDEDV) is disordered. Phosphoserine occurs at positions 73 and 75. WD repeat units lie at residues 170-210 (TYSQ…HKFK), 216-258 (DVGW…TALD), 263-302 (ERRF…RTLQ), 305-345 (SHED…EDDP), 353-392 (GHQD…SREG), 435-480 (GVLH…KKLT), and 481-520 (NHKA…YFQD).

As to quaternary structure, interacts with DDB1 and CUL4A.

Its pathway is protein modification; protein ubiquitination. In terms of biological role, may function as a substrate receptor for CUL4-DDB1 E3 ubiquitin-protein ligase complex. The polypeptide is DDB1- and CUL4-associated factor 11 (Dcaf11) (Mus musculus (Mouse)).